Here is a 901-residue protein sequence, read N- to C-terminus: HTH-type transcriptional regulator MalT (901 aa).

39–46 (SPAGYGKT) lines the ATP pocket. Positions 829–894 (ELIRTSPLTQ…DAVQHAQQLL (66 aa)) constitute an HTH luxR-type domain. The segment at residues 853–872 (NEQIAGELEVAATTIKTHIR) is a DNA-binding region (H-T-H motif).

The protein belongs to the MalT family. As to quaternary structure, monomer in solution. Oligomerizes to an active state in the presence of the positive effectors ATP and maltotriose.

Its activity is regulated as follows. Activated by ATP and maltotriose, which are both required for DNA binding. Positively regulates the transcription of the maltose regulon whose gene products are responsible for uptake and catabolism of malto-oligosaccharides. Specifically binds to the promoter region of its target genes, recognizing a short DNA motif called the MalT box. The polypeptide is HTH-type transcriptional regulator MalT (Escherichia coli (strain K12 / MC4100 / BW2952)).